The chain runs to 308 residues: Aspartate carbamoyltransferase catalytic subunit (308 aa).

Carbamoyl phosphate is bound by residues R55 and T56. L-aspartate is bound at residue K84. Residues R105, H133, and Q136 each coordinate carbamoyl phosphate. L-aspartate contacts are provided by R167 and R228. Residues L267 and P268 each contribute to the carbamoyl phosphate site.

It belongs to the aspartate/ornithine carbamoyltransferase superfamily. ATCase family. As to quaternary structure, heterooligomer of catalytic and regulatory chains.

The catalysed reaction is carbamoyl phosphate + L-aspartate = N-carbamoyl-L-aspartate + phosphate + H(+). The protein operates within pyrimidine metabolism; UMP biosynthesis via de novo pathway; (S)-dihydroorotate from bicarbonate: step 2/3. Functionally, catalyzes the condensation of carbamoyl phosphate and aspartate to form carbamoyl aspartate and inorganic phosphate, the committed step in the de novo pyrimidine nucleotide biosynthesis pathway. The polypeptide is Aspartate carbamoyltransferase catalytic subunit (Methanocella arvoryzae (strain DSM 22066 / NBRC 105507 / MRE50)).